A 313-amino-acid chain; its full sequence is Formate-nitrite transporter (313 aa).

The Cytoplasmic portion of the chain corresponds to 1 to 47 (MPKSNTKYVIDPLSVKTSCSSEESYIRCVEYGKSKAHYSSLILLAKA). A helical membrane pass occupies residues 48-68 (ILAGVFVGVCAHASGIAGGLF). Topologically, residues 69–77 (YYHKLREYV) are extracellular. Residues 78–98 (GASMSAFVYGFTFPIAFLCII) traverse the membrane as a helical segment. At 99 to 128 (CTGSDLFTGNTLAVTTALLHGKVSCLEYVR) the chain is on the cytoplasmic side. Residues 129 to 149 (VMCISLFGNYVGAVSFAFFVS) traverse the membrane as a helical segment. The Extracellular segment spans residues 150 to 185 (YGSGAFHKKEQVDKNHIFQFLNDIAVKKVNHTFVEC). The N-linked (GlcNAc...) asparagine glycan is linked to Asn179. The helical transmembrane segment at 186–206 (ICLAIGCNIFVCLAVYFVLSI) threads the bilayer. At 207–211 (KDGSG) the chain is on the cytoplasmic side. The chain crosses the membrane as a helical span at residues 212–232 (MVFSVFFAVYAFAIAGYEHII). The Extracellular portion of the chain corresponds to 233-260 (ANIYTLNISLMIDTEVSFTQVYFKNLLP). N-linked (GlcNAc...) asparagine glycosylation is present at Asn239. The helical transmembrane segment at 261-281 (TLIGNYIAGALVLACPLFFIY) threads the bilayer. Residues 282–313 (RSYYINYEKMNEPSGGSLRSISIEMKNDGGAT) lie on the Cytoplasmic side of the membrane.

The protein belongs to the FNT transporter (TC 1.A.16) family. Homopentamer.

The protein resides in the cell membrane. It is found in the vacuole membrane. The enzyme catalyses (S)-lactate(in) + H(+)(in) = (S)-lactate(out) + H(+)(out). The catalysed reaction is formate(in) + H(+)(in) = formate(out) + H(+)(out). It carries out the reaction pyruvate(out) + H(+)(out) = pyruvate(in) + H(+)(in). It catalyses the reaction acetate(out) + H(+)(out) = acetate(in) + H(+)(in). Its activity is regulated as follows. Inhibited by the Malaria Box compound MMV007839 and its derivatives BH296 and BH267.meta. Its function is as follows. Monocarboxylate-proton symporter that mediates the efflux of the waste product lactate in the intraerythrocytic parasites; active in acidic-to-neutral pH range. Transports L-lactate. The chain is Formate-nitrite transporter from Plasmodium ovale.